Here is a 297-residue protein sequence, read N- to C-terminus: Protease HtpX homolog (297 aa).

2 helical membrane-spanning segments follow: residues 5–25 and 43–63; these read IFLFILTNLLVITTIGIVLTI and LMALLVFSLVVGFVGSFISLG. Residue His154 participates in Zn(2+) binding. The active site involves Glu155. Residue His158 coordinates Zn(2+). 2 helical membrane passes run 169-189 and 203-223; these read LLQGIVNTFVVFLSRIAAWVA and FIAMIVFQIIFSILGSLVVFA. Glu229 lines the Zn(2+) pocket.

It belongs to the peptidase M48B family. It depends on Zn(2+) as a cofactor.

It localises to the cell membrane. This is Protease HtpX homolog from Bacillus velezensis (strain DSM 23117 / BGSC 10A6 / LMG 26770 / FZB42) (Bacillus amyloliquefaciens subsp. plantarum).